The sequence spans 116 residues: T-cell leukemia/lymphoma protein 1A (116 aa).

The protein belongs to the TCL1 family. As to quaternary structure, homodimer. Interacts with AKT1, AKT2 and AKT3 (via PH domain). Interacts with PNPT1; the interaction has no effect on PNPT1 exonuclease activity.

It localises to the cytoplasm. The protein resides in the nucleus. It is found in the microsome. The protein localises to the endoplasmic reticulum. Enhances the phosphorylation and activation of AKT1 and AKT2. Enhances cell proliferation, stabilizes mitochondrial membrane potential and promotes cell survival. The polypeptide is T-cell leukemia/lymphoma protein 1A (Tcl1a) (Mus musculus (Mouse)).